An 850-amino-acid polypeptide reads, in one-letter code: Protein stoned-A (850 aa).

The segment covering 1–16 (MLKLPKGLKKKKKKSK) has biased composition (basic residues). Disordered stretches follow at residues 1-95 (MLKL…AAGG) and 125-164 (KESF…LGQI). The interval 26 to 290 (ELEQYKRDLK…QNLLLSESIE (265 aa)) is interaction with Syt. The segment covering 28–38 (EQYKRDLKAKQ) has biased composition (basic and acidic residues). Over residues 78–91 (ILNAQQQLSDQNQG) the composition is skewed to polar residues. Positions 136-164 (AEKKKQKEEEAARLEAEQQEREKQRLGQI) are enriched in basic and acidic residues. Residues 224 to 226 (DPF) carry the DPF 1 motif. Disordered regions lie at residues 345 to 375 (EEEE…EEDD) and 412 to 498 (GSWA…PPFL). Over residues 431–440 (PPPPVRPPTG) the composition is skewed to pro residues. Positions 451–462 (SEDEEENPEDDP) are enriched in acidic residues. 2 short sequence motifs (DPF) span residues 461–463 (DPF) and 535–537 (DPF). 4 disordered regions span residues 573 to 610 (HSLS…QRKS), 634 to 673 (GNEL…TSHV), 738 to 760 (RKKL…FDTS), and 800 to 825 (LGLG…IDPF). 2 stretches are compositionally biased toward basic and acidic residues: residues 574–588 (SLSD…DQKE) and 596–607 (LEQKETDFDTAQ). 3 short sequence motifs (DPF) span residues 666–668 (DPF), 755–757 (DPF), and 823–825 (DPF).

Interacts with the second C2 domain of Syt.

The protein localises to the cytoplasm. It is found in the synapse. Its subcellular location is the cytoplasmic vesicle. The protein resides in the secretory vesicle. It localises to the synaptic vesicle. Adapter protein involved in endocytic recycling of synaptic vesicles membranes. May act by mediating the retrieval of synaptotagmin protein Syt from the plasma membrane, thereby facilitating the internalization of multiple synaptic vesicles from the plasma membrane. This chain is Protein stoned-A (stnA), found in Drosophila melanogaster (Fruit fly).